A 398-amino-acid chain; its full sequence is Argininosuccinate synthase (398 aa).

Residue 8–16 (AYSGGLDTS) coordinates ATP. Tyr87 provides a ligand contact to L-citrulline. Gly117 contacts ATP. L-aspartate is bound by residues Thr119, Asn123, and Asp124. Residue Asn123 participates in L-citrulline binding. Positions 127, 175, 260, and 272 each coordinate L-citrulline.

The protein belongs to the argininosuccinate synthase family. Type 1 subfamily. As to quaternary structure, homotetramer.

The protein resides in the cytoplasm. The enzyme catalyses L-citrulline + L-aspartate + ATP = 2-(N(omega)-L-arginino)succinate + AMP + diphosphate + H(+). It functions in the pathway amino-acid biosynthesis; L-arginine biosynthesis; L-arginine from L-ornithine and carbamoyl phosphate: step 2/3. This Mycobacterium avium (strain 104) protein is Argininosuccinate synthase.